The following is a 122-amino-acid chain: Small ribosomal subunit protein uS13 (122 aa).

The disordered stretch occupies residues 96 to 122 (PVRGQRTRTNARTRKGPKKTVGVRRAK).

This sequence belongs to the universal ribosomal protein uS13 family. In terms of assembly, part of the 30S ribosomal subunit. Forms a loose heterodimer with protein S19. Forms two bridges to the 50S subunit in the 70S ribosome.

In terms of biological role, located at the top of the head of the 30S subunit, it contacts several helices of the 16S rRNA. In the 70S ribosome it contacts the 23S rRNA (bridge B1a) and protein L5 of the 50S subunit (bridge B1b), connecting the 2 subunits; these bridges are implicated in subunit movement. Contacts the tRNAs in the A and P-sites. The sequence is that of Small ribosomal subunit protein uS13 from Halothermothrix orenii (strain H 168 / OCM 544 / DSM 9562).